Here is a 315-residue protein sequence, read N- to C-terminus: Olfactory receptor 4K3 (315 aa).

Residues 1 to 25 (MAWSNQSAVTEFILRGLSSSLELQI) are Extracellular-facing. An N-linked (GlcNAc...) asparagine glycan is attached at Asn5. Residues 26-49 (FYFLFFSIVYAATVLGNLLIVVTI) form a helical membrane-spanning segment. At 50–57 (ASEPHLHS) the chain is on the cytoplasmic side. The helical transmembrane segment at 58 to 79 (PMYFLLGNLSFIDMSLASFATP) threads the bilayer. Over 80-100 (KMIADFLREHKAISFEGCMTQ) the chain is Extracellular. Cysteines 97 and 189 form a disulfide. The chain crosses the membrane as a helical span at residues 101 to 120 (MFFLHLLGGAEIVLLISMSF). Topologically, residues 121–139 (DRYVAICKPLHYLTIMSRR) are cytoplasmic. Residues 140 to 158 (MCVGLVILSWIVGIFHALS) traverse the membrane as a helical segment. Residues 159–195 (QLAFTVNLPFCGPNEVDSFFCDLPLVIKLACVDTYIL) lie on the Extracellular side of the membrane. The helical transmembrane segment at 196-219 (GVFMISTSGMIALVCFILLVISYT) threads the bilayer. Residues 220–235 (IILVTVRQRSSGGSSK) are Cytoplasmic-facing. A helical membrane pass occupies residues 236 to 258 (ALSTCSAHFTVVTLFFGPCTFIY). Residues 259–269 (VWPFTNFPIDK) are Extracellular-facing. The chain crosses the membrane as a helical span at residues 270–289 (VLSVFYTIYTPLLNPVIYTV). The Cytoplasmic segment spans residues 290–315 (RNKDVKYSMRKLSSHIFKSRKTDHTP).

Belongs to the G-protein coupled receptor 1 family.

The protein localises to the cell membrane. Functionally, odorant receptor. The protein is Olfactory receptor 4K3 (OR4K3) of Homo sapiens (Human).